We begin with the raw amino-acid sequence, 886 residues long: Semaphorin-6B (886 aa).

Residues 1 to 26 (MWTPRVPPPRPALSFFLLLLLGVTYG) form the signal peptide. Topologically, residues 27-605 (LFPEEPPPLS…VSVNLLVTSS (579 aa)) are extracellular. The Sema domain occupies 32–525 (PPPLSVAPRD…FPRCVVRVPV (494 aa)). N-linked (GlcNAc...) asparagine glycosylation is present at N75. 2 cysteine pairs are disulfide-bonded: C117–C127 and C145–C154. N-linked (GlcNAc...) asparagine glycans are attached at residues N156 and N292. 2 disulfide bridges follow: C268-C379 and C293-C338. N-linked (GlcNAc...) asparagine glycans are attached at residues N387, N442, and N463. 4 disulfides stabilise this stretch: C487–C519, C528–C546, C534–C580, and C538–C554. Residues 606 to 626 (VAAFVVGAVVSGFSVGWFVGL) traverse the membrane as a helical segment. Over 627-886 (RERRELARRK…TGERTAPPVP (260 aa)) the chain is Cytoplasmic. Disordered stretches follow at residues 655-677 (RLGE…PGGP), 697-731 (HGGP…AHAL), and 761-886 (EQPQ…PPVP). Gly residues predominate over residues 662–674 (TGPGGRGGAGGGP). Omega-N-methylarginine is present on R667. Residues 707 to 718 (LLPTPEQTPLPQ) are compositionally biased toward low complexity.

The protein belongs to the semaphorin family. As to quaternary structure, homodimer. Binds specifically the SH3 domain of the protooncogene C-SRC. In adulthood, it is expressed ubiquitously.

Its subcellular location is the cell membrane. In terms of biological role, functions as a cell surface repellent for mossy fibers of developing neurons in the hippocampus where it plays a role in axon guidance. May function through the PLXNA4 receptor expressed by mossy cell axons. This is Semaphorin-6B (Sema6b) from Mus musculus (Mouse).